A 752-amino-acid chain; its full sequence is Complement C2 (752 aa).

The N-terminal stretch at 1-20 is a signal peptide; that stretch reads MGPLMVLFCLLFVYTGLADS. Sushi domains are found at residues 22–86, 87–146, and 149–206; these read PSCP…VCKP, VRCP…VCDN, and GHCP…ICRQ. 6 disulfides stabilise this stretch: Cys24–Cys64, Cys51–Cys84, Cys89–Cys131, Cys117–Cys144, Cys151–Cys191, and Cys177–Cys204. Residue Asn29 is glycosylated (N-linked (GlcNAc...) asparagine). N-linked (GlcNAc...) asparagine glycosylation occurs at Asn112. A VWFA domain is found at 254–452; that stretch reads NLYLLLDCSQ…KALHQVFEHM (199 aa). The short motif at 260 to 264 is the MIDAS-like motif element; that stretch reads DCSQS. Residues Ser262 and Ser264 each coordinate Mg(2+). 2 N-linked (GlcNAc...) asparagine glycosylation sites follow: Asn290 and Asn333. Residue Thr337 coordinates Mg(2+). 3 cysteine pairs are disulfide-bonded: Cys463–Cys581, Cys492–Cys508, and Cys584–Cys600. One can recognise a Peptidase S1 domain in the interval 464–744; sequence GVGNMSANAS…MQPWLRQHLG (281 aa). Asn467 and Asn471 each carry an N-linked (GlcNAc...) asparagine glycan. Residues His507 and Asp561 each act as charge relay system in the active site. Residues Asn621 and Asn651 are each glycosylated (N-linked (GlcNAc...) asparagine). 2 disulfides stabilise this stretch: Cys638-Cys665 and Cys675-Cys705. The active-site Charge relay system is Ser679.

This sequence belongs to the peptidase S1 family. As to quaternary structure, serine protease component of the C3 convertase, also named C4bC2b, composed of the serine protease complement C2b and complement C4b. Serine protease component of the C5 convertase, also named C4bC2bC3b, composed of the serine protease complement C2b, complement C3b, as well as complement C4b. The cofactor is Mg(2+). Mn(2+) is required as a cofactor. Post-translationally, cleaved and activated by different proteases depending on the complement pathway to generate complement C2a and serine protease complement C2b chains. Cleaved and activated by C1S following activation by the classical complement system. Cleaved and activated by MASP2 following activation by the lectin complement system. Cleaved and activated by GZMK following activation by the GZMK complement system.

The protein resides in the secreted. It is found in the cell surface. It carries out the reaction Selective cleavage of Arg-|-Ser bond in complement component C3 alpha-chain to form C3a and C3b, and Arg-|-Xaa bond in complement component C5 alpha-chain to form C5a and C5b.. Functionally, precursor of the catalytic component of the C3 and C5 convertase complexes, which are part of the complement pathway, a cascade of proteins that leads to phagocytosis and breakdown of pathogens and signaling that strengthens the adaptive immune system. Component C2 is part of the classical, lectin and GZMK complement systems. Its function is as follows. Catalytic component of the complement C3 and C5 convertase complexes. Following complement activation, recruited to the surface of pathogens by complement C4b opsonin to form the C3 convertase, or C3b and C4b opsonins to form the C5 convertase. As part of the C3 convertase, cleaves and activate C3 into C3a anaphylatoxin and C3b opsonin, the next components of the complement pathways. As part of the C5 convertase, cleaves and activate C5 into C5a anaphylatoxin and C5b component of the membrane attack complex. The sequence is that of Complement C2 from Gorilla gorilla gorilla (Western lowland gorilla).